A 186-amino-acid polypeptide reads, in one-letter code: Threonylcarbamoyl-AMP synthase (186 aa).

In terms of domain architecture, YrdC-like spans 3–186 (ELTLDSAVAT…DALSGNVLRS (184 aa)).

Belongs to the SUA5 family. TsaC subfamily.

The protein localises to the cytoplasm. It carries out the reaction L-threonine + hydrogencarbonate + ATP = L-threonylcarbamoyladenylate + diphosphate + H2O. Functionally, required for the formation of a threonylcarbamoyl group on adenosine at position 37 (t(6)A37) in tRNAs that read codons beginning with adenine. Catalyzes the conversion of L-threonine, HCO(3)(-)/CO(2) and ATP to give threonylcarbamoyl-AMP (TC-AMP) as the acyladenylate intermediate, with the release of diphosphate. This is Threonylcarbamoyl-AMP synthase from Stenotrophomonas maltophilia (strain K279a).